A 359-amino-acid chain; its full sequence is Non-classical arabinogalactan protein 31 (359 aa).

The first 24 residues, 1 to 24 (MGFIGKSVLVSLVALWCFTSSVFT), serve as a signal peptide directing secretion. The segment at 31–215 (TQTPSLAPAP…PPVSPPTKPP (185 aa)) is disordered. Residues 44 to 66 (HHGHHHPHPPHHHHPHPHPHPHP) show a composition bias toward basic residues. Pro residues predominate over residues 67-215 (PAKSPVKPPV…PPVSPPTKPP (149 aa)). Residues P71, P75, P79, P82, P83, P87, P91, P95, P99, P103, P107, P111, P114, P115, P119, P123, P127, P131, P135, P139, P143, P147, P151, P155, P159, P163, P167, P171, P175, P179, P183, P186, P187, P191, P195, P199, P203, P207, P210, P211, P215, and P219 each carry the 4-hydroxyproline modification. Residues P71, P75, P79, P82, P83, P87, P91, P95, P99, P103, P107, P111, P114, P115, P119, P123, P127, P131, P135, P139, P143, P147, P151, P155, P159, P163, P167, P171, P175, P179, P183, P186, P187, P191, P195, P199, P203, P207, P210, P211, P215, and P219 are each glycosylated (O-linked (Ara...) hydroxyproline). Repeat 1 spans residues 90–109 (PPVYPPTKAPVKPPTKPPVK). 3 tandem repeats follow at residues 122-141 (PPVYPPTKAPVKPPTKPPVK), 142-161 (PPVYPPTKAPVKPPTKPPVK), and 162-181 (PPVYPPTKAPVKPPTKPPVK). N-linked (GlcNAc...) asparagine glycans are attached at residues N226 and N269.

Belongs to the non-classical AGP family. In terms of processing, hydroxylated on numerous prolines in the proline-rich region. O-glycosylated on numerous hydroxyprolines in the proline-rich region; noncontiguous hydroxylproline residues are glycosylated with arabinogalactan. As to expression, expressed in vascular bundles of roots, leaves, sepals and stamen filaments, and pistils but not stigma.

The protein resides in the secreted. The protein localises to the cell wall. In terms of biological role, proteoglycan that may contribute to the strengthening of cell walls. This Arabidopsis thaliana (Mouse-ear cress) protein is Non-classical arabinogalactan protein 31.